Here is a 215-residue protein sequence, read N- to C-terminus: PIINLSFGEANNYCKIKCSRGIHTLCKFGTSMKPNCGSKLVKVHGVSNDEKNEIVNRHNQFRQKVAKGLETRGNPGPQPPAKNMNVLVWNDELAKIAQTWANQCSFGHDQCRNTEKYQVGQNVAIASTTGNSYATMSKLIEMWENEVKDFNPKKGTMGDNNFSKVGHYTQMVWGKTKEIGCGSVKYIENNWHTHYLVCNYGPAGNYMDQPIYERK.

The N-terminal stretch at 1 to 10 is a signal peptide; sequence PIINLSFGEA. Intrachain disulfides connect Cys-14/Cys-26, Cys-18/Cys-111, Cys-36/Cys-104, and Cys-181/Cys-198. The SCP domain maps to 55–200; that stretch reads VNRHNQFRQK…WHTHYLVCNY (146 aa).

This sequence belongs to the CRISP family. Venom allergen 5-like subfamily. In terms of tissue distribution, expressed by the venom gland.

The protein localises to the secreted. This is Venom allergen 5.02 from Dolichovespula maculata (Bald-faced hornet).